The following is a 607-amino-acid chain: Siderochrome iron transporter 2 (607 aa).

A disordered region spans residues 1 to 46; sequence MGLFGSFGARNKATPQVPPGAVAKAPEGTPKGPETNDQPDMDSSRL. Transmembrane regions (helical) follow at residues 86–106, 129–149, 152–172, 180–200, 210–230, 242–262, 297–317, 326–346, 367–387, 404–424, 432–452, 459–479, and 499–519; these read VWAT…QSGI, ILSS…LNLW, AEGF…LAAC, AGYV…DVFV, AFTF…APLA, WAYG…AVVF, IIGA…FSLA, SAAF…FAAW, LGAC…DLYF, YMTQ…GLWV, HTCL…MIHF, IGYV…LVIG, and FIGL…AAIY. The N-linked (GlcNAc...) asparagine glycan is linked to Asn-538. Residues 573 to 593 traverse the membrane as a helical segment; that stretch reads FGAVAATCILILGIPAIAVWK.

It belongs to the major facilitator superfamily.

The protein localises to the cell membrane. Its function is as follows. Major facilitator transporter involved in ferrichrome (FC) uptake. The protein is Siderochrome iron transporter 2 of Aspergillus fumigatus (strain ATCC MYA-4609 / CBS 101355 / FGSC A1100 / Af293) (Neosartorya fumigata).